The following is a 343-amino-acid chain: Dimethyladenosine transferase 1, mitochondrial (343 aa).

The N-terminal 27 residues, 1 to 27 (MAASGKLSTWRLPPLPTIREIIKLLRV), are a transit peptide targeting the mitochondrion. S-adenosyl-L-methionine is bound by residues L38, G63, E85, K86, D111, V112, and N141.

It belongs to the class I-like SAM-binding methyltransferase superfamily. rRNA adenine N(6)-methyltransferase family. KsgA subfamily. As to quaternary structure, interacts with mitochondrial RNA polymerase POLRMT. Interacts with TFAM. Bound to the maturing mtSSU until the late stages of assembly.

The protein localises to the mitochondrion. The catalysed reaction is adenosine(N)/adenosine(N+1) in rRNA + 4 S-adenosyl-L-methionine = N(6)-dimethyladenosine(N)/N(6)-dimethyladenosine(N+1) in rRNA + 4 S-adenosyl-L-homocysteine + 4 H(+). S-adenosyl-L-methionine-dependent methyltransferase which specifically dimethylates mitochondrial 12S rRNA at the conserved stem loop. Also required for basal transcription of mitochondrial DNA, probably via its interaction with POLRMT and TFAM. Stimulates transcription independently of the methyltransferase activity. Functionally, mitochondrial methyltransferase which uses S-adenosyl methionine to dimethylate two highly conserved adjacent adenosine residues (A1583 and A1584) within the loop of helix 45 at the 3-prime end of 12S rRNA, thereby regulating the assembly or stability of the small subunit of the mitochondrial ribosome. Also required for basal transcription of mitochondrial DNA, probably via its interaction with POLRMT and TFAM. Stimulates transcription independently of the methyltransferase activity. The protein is Dimethyladenosine transferase 1, mitochondrial (TFB1M) of Pongo abelii (Sumatran orangutan).